The sequence spans 373 residues: GTPase Obg (373 aa).

Residues 1-158 (MFVDSVELLI…KQVRLEMKLI (158 aa)) form the Obg domain. The disordered stretch occupies residues 62 to 83 (NHIKAENGRPGEGRKKYGRKGQ). The span at 64 to 76 (IKAENGRPGEGRK) shows a compositional bias: basic and acidic residues. The OBG-type G domain maps to 159–362 (ADVGLVGYPN…LRYALGDFVK (204 aa)). Residues 165–172 (GYPNVGKS), 190–194 (FTTLT), 212–215 (DIPG), 280–283 (TKID), and 343–345 (SSV) contribute to the GTP site. Positions 172 and 192 each coordinate Mg(2+).

It belongs to the TRAFAC class OBG-HflX-like GTPase superfamily. OBG GTPase family. Monomer. Requires Mg(2+) as cofactor.

It localises to the cytoplasm. Functionally, an essential GTPase which binds GTP, GDP and possibly (p)ppGpp with moderate affinity, with high nucleotide exchange rates and a fairly low GTP hydrolysis rate. Plays a role in control of the cell cycle, stress response, ribosome biogenesis and in those bacteria that undergo differentiation, in morphogenesis control. This chain is GTPase Obg, found in Sulfurovum sp. (strain NBC37-1).